The sequence spans 519 residues: MMRSLHSLRRMSGTVLALMLAAGLPLSAAQAQPAKPAPKGDQKPATPAPSEQFVDGIAAIVNKDVITLREVREASKLASADLQKRGIQVPDERTLQKQVLQRLIMERLERQEVDRMGIRVDEAQVDQAINMIASRNKITPAAMRAEIEKSGVTWEQYRKSLRDDIRMDRLRQRAVDANIIISDAEVDAFLKDQERNPAAAQATRAPAPQQPQPQPRQPAQSGPAMLVLAQILVRVPEGSSPDQVAALRKKAEGLLARAKKGDDFASLAAANSDGPEALQGGMMGARPLDGWPDLFVKAAGSLSAGQVSGLVQSGNGFHILKVVDRAGGGQPAQAARPAPAPAPQQPSSFQEGPSVAAPQGPVRVTQTHARHILIKTSTVMTDDQARQRLEQIRERLQGGAVKFEDMARQYSQDSTAPQGGDLGWVNPGDTVPPFEAAMNALQPNEISPPVLSPFGWHLIQVLERREHDVSDEVQRMRARQLLFERRAVPAFEDWLEQLRSQAFIDNRLEKQERLEQNNR.

An N-terminal signal peptide occupies residues 1-31; it reads MMRSLHSLRRMSGTVLALMLAAGLPLSAAQA. 2 stretches are compositionally biased toward low complexity: residues 31–45 and 197–207; these read AQPA…QKPA and PAAAQATRAPA. Disordered regions lie at residues 31-50 and 196-221; these read AQPA…PAPS and NPAA…PAQS. The PpiC 1 domain occupies 223 to 324; the sequence is PAMLVLAQIL…NGFHILKVVD (102 aa). Residues 328–361 form a disordered region; that stretch reads GGQPAQAARPAPAPAPQQPSSFQEGPSVAAPQGP. One can recognise a PpiC 2 domain in the interval 364–463; it reads VTQTHARHIL…FGWHLIQVLE (100 aa).

The protein localises to the periplasm. It catalyses the reaction [protein]-peptidylproline (omega=180) = [protein]-peptidylproline (omega=0). Functionally, chaperone involved in the correct folding and assembly of outer membrane proteins. Recognizes specific patterns of aromatic residues and the orientation of their side chains, which are found more frequently in integral outer membrane proteins. May act in both early periplasmic and late outer membrane-associated steps of protein maturation. This Bordetella parapertussis (strain 12822 / ATCC BAA-587 / NCTC 13253) protein is Chaperone SurA.